Reading from the N-terminus, the 946-residue chain is MEYNFREIEKKWHDYWIAEKVYKVEKDTNKPKYYVLDMFPYPSGAGLHVGHPLGYIASDIYSRFKRLQGFNVLHPMGYDAYGLPAEQYAIQTGQHPEITTKNNIARYREQLEKIGFCYDWSREIRTCDPEYYKWTQWAFIRMFNSYYCNDEKQARPISELIQAFETSGTEGLNVACGEELSFTAEEWKAKSDKEKQEILLNYRIAYRGETMVNWCAALGTVLANDEVVNGVSERGGYPVEQKIMRQWCLRVSAYAQRLLDGLDTIDWTDSLKETQKNWIGRSEGAEVRFKVKDSDKEFTIFTTRADTMFGVTFMVLAPESELVQQLTTADQKAEVDAYLDRTKKRTERERIADRQVTGVFSGSYAINPFTGEAVPIWISDYVLAGYGTGAIMAVPAHDSRDYAFAKHFGLEIRPLVEGCDVSKESFDAKEGIVCNSPRTGVTPYCDLSLNGLTIKEAIAATKKYVKDHDLGRVKINYRLRDAIFSRQRYWGEPFPVYYDADSMPQMLPEECLPLLLPEVDKFLPTETGEPPLGHAVKWAWDTVNQKVTEVSKIDNQTIFPLELCTMPGFAGSSAYYLRYMDPHNDKALVAKDVDEYWRNVDLYIGGTEHATGHLIYSRFWNKFLFDLGIVCEEEPFKKLINQGMIQGRSNFVYRINGTNKFVSLNLKDQYEVTPIHVDVNIVSNDLLDIEAFKNWRPEYNDAEFVLEDGKYICGWAVEKMSKSMFNVVNPDMIVEKYGADTLRLYEMFLGPLEQSKPWDTNGIDGVHRFLKKLWGLFFGNTDTLQVTDAEPTADELKSLHKLIKKVTFDIEHFSYNTSISAFMICVNELTSLKCSKRAILEPLITLLAPFAPHIAEELWHQLGHDTTICDARWPKHNEEYLKEKSVVYAISFNGKARYNLELPADISKEDAEKAALNHENSAKWMEGKTVKKVIVVPGKIVNIVVG.

The 'HIGH' region motif lies at 40–51 (PYPSGAGLHVGH). The 'KMSKS' region motif lies at 719–723 (KMSKS). K722 provides a ligand contact to ATP.

It belongs to the class-I aminoacyl-tRNA synthetase family.

Its subcellular location is the cytoplasm. The catalysed reaction is tRNA(Leu) + L-leucine + ATP = L-leucyl-tRNA(Leu) + AMP + diphosphate. The protein is Leucine--tRNA ligase of Parabacteroides distasonis (strain ATCC 8503 / DSM 20701 / CIP 104284 / JCM 5825 / NCTC 11152).